Here is a 191-residue protein sequence, read N- to C-terminus: 3-isopropylmalate dehydratase small subunit (191 aa).

It belongs to the LeuD family. LeuD type 1 subfamily. As to quaternary structure, heterodimer of LeuC and LeuD.

The catalysed reaction is (2R,3S)-3-isopropylmalate = (2S)-2-isopropylmalate. It functions in the pathway amino-acid biosynthesis; L-leucine biosynthesis; L-leucine from 3-methyl-2-oxobutanoate: step 2/4. Catalyzes the isomerization between 2-isopropylmalate and 3-isopropylmalate, via the formation of 2-isopropylmaleate. The protein is 3-isopropylmalate dehydratase small subunit of Solibacter usitatus (strain Ellin6076).